Reading from the N-terminus, the 318-residue chain is Transcriptional regulator NovG (318 aa).

Positions 146-156 (VASLRSSSTAG) are enriched in polar residues. Positions 146 to 176 (VASLRSSSTAGTVGRRTGQDGRSRPNDGTDG) are disordered. A compositionally biased stretch (basic and acidic residues) spans 162 to 176 (TGQDGRSRPNDGTDG).

It belongs to the ParB family.

Its function is as follows. Transcription regulator that specifically activates expression of genes involved in the novobiocin biosynthesis pathway. Binds 5'-GTTCRACTG(N)(11)CRGTYGAAC-3' DNA sequence. The chain is Transcriptional regulator NovG (novG) from Streptomyces niveus (Streptomyces spheroides).